Reading from the N-terminus, the 206-residue chain is MARYLGPKLKLSRREGTDLFLKSGVRAIDTKCKIEQPPGQHGARKPRLSDYGVQLREKQKVRRMYGVLERQFRNYYKEAARLKGNTGANLLQLLEGRLDNVVYRMGFGATRSESRQLVSHKAIMVNGRVVNIASYQVSPNDVVSIREKAKKQSRVKASLELAEQREKPTWLEVDAAKMEGVFKRMPERTDLSADINEHLIVELYSK.

Positions 96–156 (GRLDNVVYRM…EKAKKQSRVK (61 aa)) constitute an S4 RNA-binding domain.

It belongs to the universal ribosomal protein uS4 family. In terms of assembly, part of the 30S ribosomal subunit. Contacts protein S5. The interaction surface between S4 and S5 is involved in control of translational fidelity.

Its function is as follows. One of the primary rRNA binding proteins, it binds directly to 16S rRNA where it nucleates assembly of the body of the 30S subunit. Functionally, with S5 and S12 plays an important role in translational accuracy. The protein is Small ribosomal subunit protein uS4 of Serratia proteamaculans (strain 568).